The following is a 335-amino-acid chain: Phospho-N-acetylmuramoyl-pentapeptide-transferase (335 aa).

A run of 10 helical transmembrane segments spans residues 3 to 23 (LTLI…PHFI), 53 to 73 (GGTV…ILFF), 78 to 98 (SMGL…IGFL), 118 to 138 (LSLQ…PSGI), 143 to 163 (VFGF…FWVV), 175 to 195 (IDGL…VIAI), 200 to 220 (YDVL…FIFN), 226 to 246 (VFMG…ISIA), 251 to 271 (WTLL…MLQV), and 314 to 334 (VDAF…AILY).

Belongs to the glycosyltransferase 4 family. MraY subfamily. Mg(2+) is required as a cofactor.

It localises to the cell membrane. The enzyme catalyses UDP-N-acetyl-alpha-D-muramoyl-L-alanyl-gamma-D-glutamyl-L-lysyl-D-alanyl-D-alanine + di-trans,octa-cis-undecaprenyl phosphate = Mur2Ac(oyl-L-Ala-gamma-D-Glu-L-Lys-D-Ala-D-Ala)-di-trans,octa-cis-undecaprenyl diphosphate + UMP. Its pathway is cell wall biogenesis; peptidoglycan biosynthesis. Its function is as follows. Catalyzes the initial step of the lipid cycle reactions in the biosynthesis of the cell wall peptidoglycan: transfers peptidoglycan precursor phospho-MurNAc-pentapeptide from UDP-MurNAc-pentapeptide onto the lipid carrier undecaprenyl phosphate, yielding undecaprenyl-pyrophosphoryl-MurNAc-pentapeptide, known as lipid I. The sequence is that of Phospho-N-acetylmuramoyl-pentapeptide-transferase from Streptococcus uberis (strain ATCC BAA-854 / 0140J).